Consider the following 440-residue polypeptide: Xylose isomerase (440 aa).

Residues His101 and Asp104 contribute to the active site. Residues Glu232, Glu268, His271, Asp296, Asp307, Asp309, and Asp339 each contribute to the Mg(2+) site.

It belongs to the xylose isomerase family. As to quaternary structure, homotetramer. Mg(2+) serves as cofactor.

It is found in the cytoplasm. The enzyme catalyses alpha-D-xylose = alpha-D-xylulofuranose. The polypeptide is Xylose isomerase (Enterobacter sp. (strain 638)).